We begin with the raw amino-acid sequence, 185 residues long: MISSNEFKTGLTIEVDNDVYTIIEFQHVKPGKGAAFVRTKLKNVKTGGIIERKFNAGEKVPKAHVERREMQYLYKDGDHFVAMDNETYEQTSLTEAQIGDGVKYLKENMNLGILFFNGTVIGVDLPNTVILEVAHTEPGVRGDTATGGSKPATLETGAVVQVPFFVNEGEKLIIDTRTGNYVQRA.

The protein belongs to the elongation factor P family.

Its subcellular location is the cytoplasm. Its pathway is protein biosynthesis; polypeptide chain elongation. Its function is as follows. Involved in peptide bond synthesis. Stimulates efficient translation and peptide-bond synthesis on native or reconstituted 70S ribosomes in vitro. Probably functions indirectly by altering the affinity of the ribosome for aminoacyl-tRNA, thus increasing their reactivity as acceptors for peptidyl transferase. The chain is Elongation factor P from Desulfitobacterium hafniense (strain DSM 10664 / DCB-2).